A 262-amino-acid chain; its full sequence is Tryptophan synthase alpha chain (262 aa).

Active-site proton acceptor residues include glutamate 49 and aspartate 60.

The protein belongs to the TrpA family. As to quaternary structure, tetramer of two alpha and two beta chains.

It catalyses the reaction (1S,2R)-1-C-(indol-3-yl)glycerol 3-phosphate + L-serine = D-glyceraldehyde 3-phosphate + L-tryptophan + H2O. It functions in the pathway amino-acid biosynthesis; L-tryptophan biosynthesis; L-tryptophan from chorismate: step 5/5. Functionally, the alpha subunit is responsible for the aldol cleavage of indoleglycerol phosphate to indole and glyceraldehyde 3-phosphate. This is Tryptophan synthase alpha chain from Thermoanaerobacter sp. (strain X514).